The chain runs to 288 residues: Protoheme IX farnesyltransferase (288 aa).

The next 9 helical transmembrane spans lie at 8 to 28 (IIKP…FLLA), 35 to 55 (VNLF…ASIF), 75 to 95 (IAIG…LLIL), 105 to 125 (FLTI…YSLL), 130 to 150 (SVYS…IGYC), 161 to 181 (FILL…IGLV), 205 to 225 (INII…FFAG), 230 to 250 (NYLF…IKGF), and 265 to 285 (IFLF…IDYK).

It belongs to the UbiA prenyltransferase family. Protoheme IX farnesyltransferase subfamily.

It localises to the cell membrane. The catalysed reaction is heme b + (2E,6E)-farnesyl diphosphate + H2O = Fe(II)-heme o + diphosphate. It participates in porphyrin-containing compound metabolism; heme O biosynthesis; heme O from protoheme: step 1/1. Functionally, converts heme B (protoheme IX) to heme O by substitution of the vinyl group on carbon 2 of heme B porphyrin ring with a hydroxyethyl farnesyl side group. The sequence is that of Protoheme IX farnesyltransferase from Wigglesworthia glossinidia brevipalpis.